A 311-amino-acid chain; its full sequence is Nod factor export ATP-binding protein I (311 aa).

Positions 13 to 243 constitute an ABC transporter domain; the sequence is IDLAGVSKSY…QIGCPVIEIY (231 aa). 45 to 52 lines the ATP pocket; that stretch reads GPNGAGKS.

Belongs to the ABC transporter superfamily. Lipooligosaccharide exporter (TC 3.A.1.102) family. As to quaternary structure, the complex is composed of two ATP-binding proteins (NodI) and two transmembrane proteins (NodJ).

It localises to the cell inner membrane. Its function is as follows. Part of the ABC transporter complex NodIJ involved in the export of the nodulation factors (Nod factors), the bacterial signal molecules that induce symbiosis and subsequent nodulation induction. Nod factors are LCO (lipo-chitin oligosaccharide), a modified beta-1,4-linked N-acetylglucosamine oligosaccharide. This subunit is responsible for energy coupling to the transport system. This is Nod factor export ATP-binding protein I from Rhizobium johnstonii (strain DSM 114642 / LMG 32736 / 3841) (Rhizobium leguminosarum bv. viciae).